Consider the following 87-residue polypeptide: MKHHAFMLWSLLIFSFHVLASSGHCSGLQQASWDIFIYDFGSKTPQPPTNTDKKQARQISSPSCPTTKPMMSAPVNDARKGNTFSRT.

Positions 1–20 (MKHHAFMLWSLLIFSFHVLA) are cleaved as a signal peptide. Residues 46–87 (QPPTNTDKKQARQISSPSCPTTKPMMSAPVNDARKGNTFSRT) are disordered. The span at 57–66 (RQISSPSCPT) shows a compositional bias: polar residues.

Putative function in virulence. Could be involved in promoting S.typhimurium survival within macrophages. The protein is Virulence protein PagD (pagD) of Salmonella typhimurium (strain LT2 / SGSC1412 / ATCC 700720).